The chain runs to 270 residues: High choriolytic enzyme 1 (270 aa).

The signal sequence occupies residues 1-20; sequence MNLAPSTCLLLLFLLDIAQA. Residues 21–70 constitute a propeptide, activation peptide; sequence LPVWDEEGHEEGHEEGDGDDFVDITTRILTSNNNTDQLLLEGDLVAPTNR. N-linked (GlcNAc...) asparagine glycosylation is present at Asn-53. The 200-residue stretch at 71–270 folds into the Peptidase M12A domain; that stretch reads NAMKCWSSSC…TRINVLYNCR (200 aa). Intrachain disulfides connect Cys-75–Cys-80, Cys-120–Cys-269, and Cys-141–Cys-161. Zn(2+) is bound at residue His-169. Glu-170 is a catalytic residue. Zn(2+) is bound by residues His-173 and His-179.

It depends on Zn(2+) as a cofactor.

The protein localises to the zymogen granule. The enzyme catalyses Hydrolysis of the inner layer of fish egg envelope. Also hydrolysis of casein and small molecule substrates such as succinyl-Leu-Leu-Val-Tyr-|-7-(4-methyl)coumarylamide.. In terms of biological role, participates in the breakdown of the egg envelope, which is derived from the egg extracellular matrix, at the time of hatching. Thus allowing the newly hatched fish to swim free. HCE binds tightly to the egg envelope while it exerts the choriolytic swelling action. The sequence is that of High choriolytic enzyme 1 (hcea) from Oryzias latipes (Japanese rice fish).